Here is a 537-residue protein sequence, read N- to C-terminus: Multidrug resistance protein Stp (537 aa).

Transmembrane regions (helical) follow at residues 6–26 (LLTLIATGLGLFMIFLDALIV), 46–66 (WVVASYSLGMAVFIMSAATLA), 77–97 (IGVSLFTLGSIACGLAPSIAV), 104–124 (AQGLGAAAVSVTSLALVSAAF), 136–156 (IWTAIASIGTTTGPTLGGLLV), 163–183 (SIFYVNLPMGALVLFLTLCYV), 200–220 (LLFIVAVGALVYAVIEGPQIG), 223–243 (SVQTIVMLWTAAVGCALFVWL), 262–282 (YALAIATICTVFFAVYGMLLL), 300–320 (LMILPFSAAVAIVSPLVGHLV), 327–347 (VPILAGLCMLMLGLLMLIFSE), 352–372 (ALVLVGLGLCGSGVALCLTPI), 397–417 (AIGSTIGFAVLGSVLAAWLSA), and 478–498 (VALLVATATLAVVFLAGWRWF).

This sequence belongs to the major facilitator superfamily. EmrB family.

Its subcellular location is the cell membrane. Contributes to spectinomycin and tetracycline resistance. This Mycobacterium tuberculosis (strain ATCC 25618 / H37Rv) protein is Multidrug resistance protein Stp (stp).